A 1319-amino-acid polypeptide reads, in one-letter code: DNA-directed RNA polymerase subunit beta' (1319 aa).

Zn(2+) is bound by residues Cys59, Cys61, Cys74, and Cys77. Asp449, Asp451, and Asp453 together coordinate Mg(2+). Residues Cys773, Cys846, Cys853, and Cys856 each coordinate Zn(2+).

It belongs to the RNA polymerase beta' chain family. In terms of assembly, the RNAP catalytic core consists of 2 alpha, 1 beta, 1 beta' and 1 omega subunit. When a sigma factor is associated with the core the holoenzyme is formed, which can initiate transcription. Mg(2+) is required as a cofactor. It depends on Zn(2+) as a cofactor.

It carries out the reaction RNA(n) + a ribonucleoside 5'-triphosphate = RNA(n+1) + diphosphate. In terms of biological role, DNA-dependent RNA polymerase catalyzes the transcription of DNA into RNA using the four ribonucleoside triphosphates as substrates. This Fusobacterium nucleatum subsp. nucleatum (strain ATCC 25586 / DSM 15643 / BCRC 10681 / CIP 101130 / JCM 8532 / KCTC 2640 / LMG 13131 / VPI 4355) protein is DNA-directed RNA polymerase subunit beta'.